A 470-amino-acid chain; its full sequence is Cyclin-B1-3 (470 aa).

It belongs to the cyclin family. Cyclin AB subfamily.

This is Cyclin-B1-3 (CYCB1-3) from Oryza sativa subsp. japonica (Rice).